Reading from the N-terminus, the 481-residue chain is Inosine-5'-monophosphate dehydrogenase (481 aa).

2 consecutive CBS domains span residues 92–148 and 152–209; these read VIND…SKKV and MTKM…PEAN. Residues Asp-244 and 293-295 each bind NAD(+); that span reads GIG. The K(+) site is built by Gly-295 and Gly-297. Ser-298 contacts IMP. Cys-300 lines the K(+) pocket. Cys-300 (thioimidate intermediate) is an active-site residue. IMP contacts are provided by residues 333–335, 356–357, and 380–384; these read DGG, GS, and YRGMG. Catalysis depends on Arg-396, which acts as the Proton acceptor. Glu-410 contributes to the IMP binding site. Residues Glu-464, Ser-465, and His-466 each contribute to the K(+) site.

It belongs to the IMPDH/GMPR family. Homotetramer. Requires K(+) as cofactor.

It carries out the reaction IMP + NAD(+) + H2O = XMP + NADH + H(+). Its pathway is purine metabolism; XMP biosynthesis via de novo pathway; XMP from IMP: step 1/1. Mycophenolic acid (MPA) is a non-competitive inhibitor that prevents formation of the closed enzyme conformation by binding to the same site as the amobile flap. In contrast, mizoribine monophosphate (MZP) is a competitive inhibitor that induces the closed conformation. MPA is a potent inhibitor of mammalian IMPDHs but a poor inhibitor of the bacterial enzymes. MZP is a more potent inhibitor of bacterial IMPDH. Functionally, catalyzes the conversion of inosine 5'-phosphate (IMP) to xanthosine 5'-phosphate (XMP), the first committed and rate-limiting step in the de novo synthesis of guanine nucleotides, and therefore plays an important role in the regulation of cell growth. This Helicobacter pylori (strain ATCC 700392 / 26695) (Campylobacter pylori) protein is Inosine-5'-monophosphate dehydrogenase.